A 95-amino-acid polypeptide reads, in one-letter code: MRKYEIMYIIAPNLEEAANKEIIERFNGVLTNQGAEIEKVEEMGKRRLAYEINKFREGYYVLLNVKADADAIAEFNRLIKINDNVIRVLITKDEE.

Belongs to the bacterial ribosomal protein bS6 family.

In terms of biological role, binds together with bS18 to 16S ribosomal RNA. This Halalkalibacterium halodurans (strain ATCC BAA-125 / DSM 18197 / FERM 7344 / JCM 9153 / C-125) (Bacillus halodurans) protein is Small ribosomal subunit protein bS6 (rpsF).